The primary structure comprises 279 residues: 2-dehydropantoate 2-reductase (279 aa).

NADP(+)-binding positions include 6–11 (GLGAVG), Lys66, and Asn86. Lys158 (proton donor) is an active-site residue. Substrate-binding positions include Lys158, Asn162, Asn166, Asn176, and 225–228 (NLSS). An NADP(+)-binding site is contributed by Glu240.

It belongs to the ketopantoate reductase family.

It is found in the cytoplasm. It catalyses the reaction (R)-pantoate + NAD(+) = 2-dehydropantoate + NADH + H(+). It carries out the reaction (R)-pantoate + NADP(+) = 2-dehydropantoate + NADPH + H(+). Its pathway is cofactor biosynthesis; coenzyme A biosynthesis. Its function is as follows. Catalyzes the NAD(P)H-dependent reduction of ketopantoate into pantoic acid. The sequence is that of 2-dehydropantoate 2-reductase from Pyrobaculum aerophilum (strain ATCC 51768 / DSM 7523 / JCM 9630 / CIP 104966 / NBRC 100827 / IM2).